We begin with the raw amino-acid sequence, 842 residues long: Molybdenum cofactor sulfurase (842 aa).

K236 carries the N6-(pyridoxal phosphate)lysine modification. C402 is an active-site residue. The tract at residues 637-680 (PGSQHGDAQRSSKARLQKHQITTDQESDVQEVHPGSGTTTDSTW) is disordered. An MOSC domain is found at 663-831 (SDVQEVHPGS…AARGDVAYPT (169 aa)).

This sequence belongs to the class-V pyridoxal-phosphate-dependent aminotransferase family. MOCOS subfamily. Pyridoxal 5'-phosphate serves as cofactor.

The catalysed reaction is Mo-molybdopterin + L-cysteine + AH2 = thio-Mo-molybdopterin + L-alanine + A + H2O. The protein operates within cofactor biosynthesis; molybdopterin biosynthesis. Functionally, sulfurates the molybdenum cofactor. Sulfation of molybdenum is essential for xanthine dehydrogenase (XDH) and aldehyde oxidase (ADO) enzymes in which molybdenum cofactor is liganded by 1 oxygen and 1 sulfur atom in active form. This chain is Molybdenum cofactor sulfurase, found in Pyricularia oryzae (strain 70-15 / ATCC MYA-4617 / FGSC 8958) (Rice blast fungus).